We begin with the raw amino-acid sequence, 360 residues long: E3 ubiquitin-protein ligase HAKAI homolog (360 aa).

The segment covering 1-11 has biased composition (basic and acidic residues); the sequence is MLQIRLRRDSP. The interval 1–24 is disordered; that stretch reads MLQIRLRRDSPTETGNGARPSPTE. An RING-type zinc finger spans residues 72-107; sequence CVRCDFPIAIYGRLIPCDHAFCLECARSDSICYLCD. Residues 123-148 form a C2H2-type zinc finger; it reads FICAAPHCLRSFLKKLDFEAHVHDLH. Positions 156-360 are disordered; it reads AEKEDGNQSD…QENRDGFGQE (205 aa). 3 stretches are compositionally biased toward polar residues: residues 163-179, 186-214, and 270-283; these read QSDV…SEST, SQLQ…QNYP, and YPTT…QFFN. Residues 293–304 are compositionally biased toward low complexity; sequence ESGGSEQSSLLG.

This sequence belongs to the Hakai family. Interacts with MTB and VIR. Associates with MTA, MTB, FIP37 and VIR to form the m6A writer complex which is essential for adenosine methylation at specific mRNA sequences.

The protein localises to the nucleus speckle. It is found in the nucleus. Its subcellular location is the nucleoplasm. The catalysed reaction is S-ubiquitinyl-[E2 ubiquitin-conjugating enzyme]-L-cysteine + [acceptor protein]-L-lysine = [E2 ubiquitin-conjugating enzyme]-L-cysteine + N(6)-ubiquitinyl-[acceptor protein]-L-lysine.. Functionally, probable E3 ubiquitin-protein ligase which is a subunit of the N6-methyltransferase complex, a multiprotein complex that mediates N6-methyladenosine (m6A) methylation at the 5'-[AG]GAC-3' consensus sites of some mRNAs. Associates with MTA, MTB, FIP37 and VIR to form the m6A writer complex which is essential for adenosine methylation at specific mRNA sequences. N6-methyladenosine (m6A) plays a role in mRNA stability, processing, translation efficiency and editing. This is E3 ubiquitin-protein ligase HAKAI homolog from Arabidopsis thaliana (Mouse-ear cress).